The chain runs to 480 residues: Islet cell autoantigen 1 (480 aa).

Positions 50-253 (ASDADLDAKL…TSHTMAAIHE (204 aa)) constitute an AH domain. Basic and acidic residues-rich tracts occupy residues 276-293 (LVEK…REAV) and 306-321 (ENQH…EEGK). 2 disordered regions span residues 276–338 (LVEK…ACSG) and 400–421 (LKEP…IGSA).

The protein localises to the cytoplasm. Its subcellular location is the cytosol. The protein resides in the golgi apparatus membrane. It is found in the cytoplasmic vesicle. It localises to the secretory vesicle membrane. The protein localises to the secretory vesicle. Its subcellular location is the synaptic vesicle membrane. In terms of biological role, may play a role in neurotransmitter secretion. In Rattus norvegicus (Rat), this protein is Islet cell autoantigen 1.